A 137-amino-acid polypeptide reads, in one-letter code: 6,7-dimethyl-8-ribityllumazine synthase (137 aa).

5-amino-6-(D-ribitylamino)uracil contacts are provided by residues F11, 43–45 (SFD), and 67–69 (CVI). A (2S)-2-hydroxy-3-oxobutyl phosphate-binding site is contributed by 72–73 (DT). H75 functions as the Proton donor in the catalytic mechanism. L100 is a 5-amino-6-(D-ribitylamino)uracil binding site. R115 provides a ligand contact to (2S)-2-hydroxy-3-oxobutyl phosphate.

Belongs to the DMRL synthase family. As to quaternary structure, forms an icosahedral capsid composed of 60 subunits, arranged as a dodecamer of pentamers.

It catalyses the reaction (2S)-2-hydroxy-3-oxobutyl phosphate + 5-amino-6-(D-ribitylamino)uracil = 6,7-dimethyl-8-(1-D-ribityl)lumazine + phosphate + 2 H2O + H(+). The protein operates within cofactor biosynthesis; riboflavin biosynthesis; riboflavin from 2-hydroxy-3-oxobutyl phosphate and 5-amino-6-(D-ribitylamino)uracil: step 1/2. Catalyzes the formation of 6,7-dimethyl-8-ribityllumazine by condensation of 5-amino-6-(D-ribitylamino)uracil with 3,4-dihydroxy-2-butanone 4-phosphate. This is the penultimate step in the biosynthesis of riboflavin. This Methanococcus maripaludis (strain C5 / ATCC BAA-1333) protein is 6,7-dimethyl-8-ribityllumazine synthase.